Reading from the N-terminus, the 639-residue chain is Putative oxidoreductase UacF (639 aa).

5 4Fe-4S ferredoxin-type domains span residues 3-32, 47-77, 78-107, 110-139, and 201-235; these read KFIAAEAAECIGCHACEIACAVAHNQENWP, KGQAANPVACHHCNNAPCVTACPVNALTFQS, DSVQLDEQKCIGCKRCAIACPFGVVEMVDT, QKCDLCNQRSSGTQACIEVCPTQALRLMDD, and QQATYESDRCVYCAEKANCNWHCPLHNAIPDYIRL. Residues cysteine 12, cysteine 15, cysteine 18, cysteine 22, cysteine 56, cysteine 59, cysteine 64, cysteine 68, cysteine 87, cysteine 90, cysteine 93, cysteine 97, cysteine 112, cysteine 115, cysteine 125, cysteine 129, cysteine 210, cysteine 213, cysteine 219, and cysteine 223 each coordinate [4Fe-4S] cluster.

The cofactor is [4Fe-4S] cluster.

Its function is as follows. Involved in formate-dependent uric acid degradation under microaerobic and anaerobic conditions. May reduce the enzymes necessary for uric acid degradation. This is Putative oxidoreductase UacF from Escherichia coli (strain K12).